A 1255-amino-acid polypeptide reads, in one-letter code: Kinesin-related protein 7 (1255 aa).

A disordered region spans residues 1 to 26; it reads MESPVVEGNSGEVATPTLPQPPTPVS. Residues 28–349 enclose the Kinesin motor domain; the sequence is NIRVVCRVRP…LQFGTRAKTI (322 aa). 107 to 114 contributes to the ATP binding site; that stretch reads GQTASGKT. 3 stretches are compositionally biased toward low complexity: residues 454–491, 545–563, and 583–603; these read NNNNVDENNNTNNNDNNNNDNNNNNQYQEESNQYQQEN, NNNNVDDNNNGEINNDSDG, and HNINNNNNNNNNINNDNNSNS. Disordered stretches follow at residues 454–503, 530–564, 579–628, 661–686, 795–864, and 915–934; these read NNNN…NSSF, GNISDDDDDDDDHHSNNNNVDDNNNGEINNDSDGY, DLND…MDVN, ENEQQQQQQQHNDDDEDIKSTTSNAT, EEGS…TKSI, and ISIKSNKEPSPSSSTTTSIK. Residues 608-628 show a composition bias toward polar residues; the sequence is VSTSYITSSPNLSPSKSMDVN. A compositionally biased stretch (acidic residues) spans 813-834; sequence GDDDDEENEDNENEDVIVDSDE. Over residues 915-932 the composition is skewed to low complexity; the sequence is ISIKSNKEPSPSSSTTTS. Residues 945 to 965 form a helical membrane-spanning segment; sequence IIFTIILTITLVSSSLLCLYL. Positions 1088-1223 form a coiled coil; the sequence is NYITKIDQLS…QELEDAPIAL (136 aa).

It belongs to the TRAFAC class myosin-kinesin ATPase superfamily. Kinesin family.

The protein resides in the nucleus membrane. It is found in the cytoplasm. It localises to the cytoskeleton. In terms of biological role, microtubule-associated force-producing protein that plays a role in organelle transport. Its motor activity is directed toward the microtubule's plus end. May be involved in cell motility or cell differentiation during prestalk formation. The sequence is that of Kinesin-related protein 7 (kif7) from Dictyostelium discoideum (Social amoeba).